Here is a 473-residue protein sequence, read N- to C-terminus: Transposase for insertion sequence element IS1151 (473 aa).

This sequence belongs to the transposase 11 family.

Its function is as follows. Involved in the transposition of the insertion sequence. This is Transposase for insertion sequence element IS1151 (tnp) from Clostridium perfringens.